The sequence spans 293 residues: Ribosomal protein L11 methyltransferase (293 aa).

Thr-145, Gly-166, Asp-188, and Asn-230 together coordinate S-adenosyl-L-methionine.

The protein belongs to the methyltransferase superfamily. PrmA family.

The protein resides in the cytoplasm. It carries out the reaction L-lysyl-[protein] + 3 S-adenosyl-L-methionine = N(6),N(6),N(6)-trimethyl-L-lysyl-[protein] + 3 S-adenosyl-L-homocysteine + 3 H(+). Functionally, methylates ribosomal protein L11. The chain is Ribosomal protein L11 methyltransferase from Erwinia tasmaniensis (strain DSM 17950 / CFBP 7177 / CIP 109463 / NCPPB 4357 / Et1/99).